We begin with the raw amino-acid sequence, 2120 residues long: Alpha-tectorin (2120 aa).

Residues 1–24 (MNTRSLLSAWAALLVVTVRHRAHA) form the signal peptide. N-linked (GlcNAc...) asparagine glycosylation is found at Asn34, Asn215, Asn258, Asn277, Asn445, and Asn496. Residues 98–252 (PFCGDVANGI…GRWAFKIDGR (155 aa)) enclose the NIDO domain. Positions 260–312 (SLRGQFLHQGEIFWENSNCSTKCRCLDFNNEIFCQEMLAPFETVEPKIKFFQC) constitute a VWFC domain. The 174-residue stretch at 317-490 (TACVVFGDPH…RVPHPERKCS (174 aa)) folds into the VWFD 1 domain. 2 cysteine pairs are disulfide-bonded: Cys319/Cys451 and Cys341/Cys489. The region spanning 578–620 (PGHSHYSGCASGCPATCSDLTAPLRCTAPCPEGCECDDGHVLS) is the TIL 1 domain. N-linked (GlcNAc...) asparagine glycans are attached at residues Asn666, Asn792, Asn822, Asn834, Asn877, Asn899, Asn907, and Asn928. The VWFD 2 domain occupies 690–865 (GLCSVGQNQV…SWTTFDEICN (176 aa)). Cys692 and Cys828 are joined by a disulfide. In terms of domain architecture, TIL 2 spans 963 to 1013 (CPENSHFEECMSCVETCETLATGCCMDTCTEGCQCDEGFALRSPCVPRGEC). N-linked (GlcNAc...) asparagine glycosylation is found at Asn1025, Asn1041, Asn1207, and Asn1337. The 185-residue stretch at 1066–1250 (ASCIVSGYGH…SWAKRDTFCR (185 aa)) folds into the VWFD 3 domain. 2 disulfide bridges follow: Cys1068–Cys1213 and Cys1090–Cys1249. A TIL 3 domain is found at 1345-1398 (CPPNSHYESCVSLCQPRCAAIRLKSDCGHYCVEGCQCDPGYVLNGKSCILPQNC). The VWFD 4 domain occupies 1458 to 1633 (SFCLAAGGGV…KTNGMQKSCN (176 aa)). 7 disulfide bridges follow: Cys1460-Cys1594, Cys1482-Cys1632, Cys1684-Cys1742, Cys1708-Cys1751, Cys1753-Cys1785, Cys1773-Cys1865, and Cys1804-Cys1824. Residues Asn1511, Asn1537, Asn1723, Asn1739, Asn1761, Asn1818, Asn1831, Asn1847, Asn1887, and Asn1906 are each glycosylated (N-linked (GlcNAc...) asparagine). The 255-residue stretch at 1772-2026 (TCKAAQMEVS…YSCKINCPQH (255 aa)) folds into the ZP domain. 3 cysteine pairs are disulfide-bonded: Cys1947–Cys2007, Cys1968–Cys2023, and Cys2012–Cys2019. Asn2058 carries GPI-anchor amidated asparagine lipidation. The propeptide at 2059–2120 (GGCEQICTSQ…LWAALHDPTS (62 aa)) is removed in mature form.

In terms of assembly, may form homomeric filament after self-association or heteromeric filament after association with beta-tectorin. Post-translationally, at least 3 products of tectorin seem to exist: HMM, MMM and LMM. They may be generated by active processing or the result of proteolysis occurring between intrachain disulfide bonds. In terms of processing, the presence of a hydrophobic C-terminus preceded by a potential cleavage site strongly suggests that tectorins are synthesized as glycosylphosphatidylinositol-linked, membrane-bound precursors. Tectorins are targeted to the apical surface of the inner ear epithelia by the lipid and proteolytically released into the extracellular compartment. In terms of tissue distribution, expressed in the inner ear.

It is found in the cell membrane. The protein resides in the secreted. Its subcellular location is the extracellular space. The protein localises to the extracellular matrix. Functionally, one of the major non-collagenous components of the tectorial membrane. The tectorial membrane is an extracellular matrix of the inner ear that covers the neuroepithelium of the cochlea and contacts the stereocilia bundles of specialized sensory hair cells. Sound induces movement of these hair cells relative to the tectorial membrane, deflects the stereocilia and leads to fluctuations in hair-cell membrane potential, transducing sound into electrical signals. This is Alpha-tectorin (TECTA) from Gallus gallus (Chicken).